The following is a 361-amino-acid chain: Palmitoyltransferase ZDHHC16 (361 aa).

Residues 1 to 77 lie on the Cytoplasmic side of the membrane; that stretch reads MRGQRSLLLG…VYWLVDNVIR (77 aa). A helical transmembrane segment spans residues 78-98; it reads WFGVVFVVLVIVLTGSIVAIA. Topologically, residues 99–116 are lumenal; it reads YLCVLPLILRTYSVPRLC. The chain crosses the membrane as a helical span at residues 117-137; the sequence is WHFFYSHWNLILIVFHYYQAI. Residues 138–198 are Cytoplasmic-facing; the sequence is TTPPGYPPQG…NNCVGHYNHR (61 aa). The region spanning 155 to 205 is the DHHC domain; sequence SICKKCIYPKPARTHHCSICNRCVLKMDHHCPWLNNCVGHYNHRYFFSFCF. Cysteine 185 (S-palmitoyl cysteine intermediate) is an active-site residue. A helical transmembrane segment spans residues 199-219; it reads YFFSFCFFMTLGCVYCSYGSW. At 220-250 the chain is on the lumenal side; that stretch reads DLFREAYAAIETYHQTPPPTFSFRERITHKS. A helical transmembrane segment spans residues 251–271; sequence LVYLWFLCSSVALALGALTMW. Residues 272 to 361 lie on the Cytoplasmic side of the membrane; sequence HAVLISRGET…TAHSASVMAV (90 aa).

The protein belongs to the DHHC palmitoyltransferase family. As to quaternary structure, interacts with ABL1. Interacts with COPS5. Ubiquitously expressed.

The protein localises to the endoplasmic reticulum membrane. It carries out the reaction L-cysteinyl-[protein] + hexadecanoyl-CoA = S-hexadecanoyl-L-cysteinyl-[protein] + CoA. Its function is as follows. Palmitoyl acyltransferase that mediates palmitoylation of proteins such as PLN and ZDHHC6. Required during embryonic heart development and cardiac function, possibly by mediating palmitoylation of PLN, thereby affecting PLN phosphorylation and homooligomerization. Also required for eye development. Palmitoylates ZDHHC6, affecting the quaternary assembly of ZDHHC6, its localization, stability and function. May play a role in DNA damage response. May be involved in apoptosis regulation. Involved in the proliferation of neural stem cells by regulating the FGF/ERK pathway. This Mus musculus (Mouse) protein is Palmitoyltransferase ZDHHC16.